The sequence spans 427 residues: Trigger factor (427 aa).

Residues 163–248 form the PPIase FKBP-type domain; sequence GDTVVIDFVG…IHEVKTKEVP (86 aa).

This sequence belongs to the FKBP-type PPIase family. Tig subfamily.

The protein localises to the cytoplasm. The catalysed reaction is [protein]-peptidylproline (omega=180) = [protein]-peptidylproline (omega=0). Its function is as follows. Involved in protein export. Acts as a chaperone by maintaining the newly synthesized protein in an open conformation. Functions as a peptidyl-prolyl cis-trans isomerase. The polypeptide is Trigger factor (Streptococcus agalactiae serotype III (strain NEM316)).